The following is a 418-amino-acid chain: Thyroid hormone receptor alpha (418 aa).

A disordered region spans residues 1–41 (MDQNLSGLDCLSEPDEKRWPDGKRKRKNSQCMGKSGMSGDS). The modulating stretch occupies residues 1-60 (MDQNLSGLDCLSEPDEKRWPDGKRKRKNSQCMGKSGMSGDSSVSLLSAGYIPSYLTKDEP). Zn(2+) contacts are provided by Cys-61, Cys-64, Cys-78, Cys-81, Cys-99, Cys-105, Cys-115, and Cys-118. 2 NR C4-type zinc fingers span residues 61 to 81 (CVVC…CEGC) and 99 to 123 (CKYD…FKKC). Residues 61-135 (CVVCSDKATG…VGMAMDLVLD (75 aa)) constitute a DNA-binding region (nuclear receptor). Residues 171-415 (EEWELIRIVT…PPLFLEVFED (245 aa)) enclose the NR LBD domain. Residues Arg-236 and Ser-285 each contribute to the 3,3',5-triiodo-L-thyronine site.

Belongs to the nuclear hormone receptor family. NR1 subfamily. As to expression, highest level of expression in erythrocytes. Also expressed in liver, tail, eye, muscle and skin.

Its subcellular location is the nucleus. Functionally, nuclear hormone receptor that can act as a repressor or activator of transcription. High affinity receptor for thyroid hormones, including triiodothyronine and thyroxine. The sequence is that of Thyroid hormone receptor alpha (thra) from Aquarana catesbeiana (American bullfrog).